We begin with the raw amino-acid sequence, 197 residues long: Pyridoxal 5'-phosphate synthase subunit PdxT (197 aa).

Glycine 53 to serine 55 lines the L-glutamine pocket. The Nucleophile role is filled by cysteine 85. Residues arginine 114 and isoleucine 142 to arginine 143 each bind L-glutamine. Residues histidine 179 and glutamate 181 each act as charge relay system in the active site.

The protein belongs to the glutaminase PdxT/SNO family. As to quaternary structure, in the presence of PdxS, forms a dodecamer of heterodimers. Only shows activity in the heterodimer.

The catalysed reaction is aldehydo-D-ribose 5-phosphate + D-glyceraldehyde 3-phosphate + L-glutamine = pyridoxal 5'-phosphate + L-glutamate + phosphate + 3 H2O + H(+). The enzyme catalyses L-glutamine + H2O = L-glutamate + NH4(+). It participates in cofactor biosynthesis; pyridoxal 5'-phosphate biosynthesis. Its function is as follows. Catalyzes the hydrolysis of glutamine to glutamate and ammonia as part of the biosynthesis of pyridoxal 5'-phosphate. The resulting ammonia molecule is channeled to the active site of PdxS. The polypeptide is Pyridoxal 5'-phosphate synthase subunit PdxT (Thermococcus onnurineus (strain NA1)).